A 112-amino-acid polypeptide reads, in one-letter code: C-type natriuretic peptide 3 (112 aa).

The first 19 residues, 1–19, serve as a signal peptide directing secretion; it reads MSLRAFMLCVCLLLQSVGA. A propeptide spanning residues 20–90 is cleaved from the precursor; that stretch reads RPASELQNLE…SKRSWGRYKK (71 aa). A disordered region spans residues 33-67; sequence QDQLSSTEHPEEDRLDRTREEPQLGGSSSREAADE. A compositionally biased stretch (basic and acidic residues) spans 40–54; the sequence is EHPEEDRLDRTREEP. The cysteines at positions 96 and 112 are disulfide-linked.

This sequence belongs to the natriuretic peptide family. In terms of tissue distribution, spinal cord, kidney, ovary, heart and spleen, and to a lower extent in brain and liver.

Its subcellular location is the secreted. In terms of biological role, exhibits natriuretic and vasodepressant activity. Has cGMP-stimulating activity. May help to regulate body fluid homeostasis in a variety of aquatic environments. This chain is C-type natriuretic peptide 3, found in Oryzias latipes (Japanese rice fish).